Consider the following 308-residue polypeptide: uncharacterized protein (308 aa).

The segment at 19–43 (EPQASGAGPAQTPPPVTVPMTPPSK) is disordered. A compositionally biased stretch (pro residues) spans 29-43 (QTPPPVTVPMTPPSK).

This is an uncharacterized protein from Deinococcus radiodurans (strain ATCC 13939 / DSM 20539 / JCM 16871 / CCUG 27074 / LMG 4051 / NBRC 15346 / NCIMB 9279 / VKM B-1422 / R1).